The sequence spans 249 residues: Testis-expressed protein 101 (249 aa).

Residues 1 to 25 (MGTPRIQHLLILLVLGASLLTSGLE) form the signal peptide. Residues asparagine 45 and asparagine 159 are each glycosylated (N-linked (GlcNAc...) asparagine). In terms of domain architecture, UPAR/Ly6 spans 140–211 (CPTCVALGTC…PMFVREACPH (72 aa)). The GPI-anchor amidated asparagine moiety is linked to residue asparagine 222. Residues 223 to 249 (GATCLPIPVWGLQLLLPLLLPSFIHFS) constitute a propeptide, removed in mature form.

Interacts with VAMP3. Interacts with LY6K. Interacts with DPEP3; co-localized on the cell surface of spermatocytes, spermatids, and testicular spermatozoa, co-localized only in cytoplasmic droplets of caput and corpus epididymal sperm. Interacts with ADAM5. Post-translationally, N-glycosylated; by high mannose and/or biantennary complex and/or certain types of hybrid oligosaccharides; possesses different oligosaccharides chains according to its subcellular localization in the testis. Sheds from membrane raft by ACE and released from the cell surface of epididymal sperm while it passes through the caput epididymis leading to disappearance of TEX101 on spermatozoa; is essential to produce fertile spermatozoa. Detected in testis and spermatogonia. Not detected in spermatocytes. Detected in blood leukocytes.

Its subcellular location is the cell membrane. The protein localises to the membrane raft. The protein resides in the cytoplasmic vesicle. It localises to the secretory vesicle. It is found in the acrosome. Its subcellular location is the secreted. Functionally, plays a role in fertilization by controlling binding of sperm to zona pellucida and migration of spermatozoa into the oviduct. May play a role in signal transduction and promote protein tyrosine phosphorylation. The chain is Testis-expressed protein 101 from Homo sapiens (Human).